The following is a 252-amino-acid chain: Small ribosomal subunit protein eS4 (252 aa).

Positions 43 to 106 (LPLLILVRDM…NKYYRVIPVP (64 aa)) constitute an S4 RNA-binding domain.

This sequence belongs to the eukaryotic ribosomal protein eS4 family.

This chain is Small ribosomal subunit protein eS4, found in Desulfurococcus amylolyticus (strain DSM 18924 / JCM 16383 / VKM B-2413 / 1221n) (Desulfurococcus kamchatkensis).